The primary structure comprises 497 residues: Taxane 10-beta-hydroxylase (497 aa).

Heme is bound at residue C443.

The protein belongs to the cytochrome P450 family. Heme serves as cofactor.

The enzyme catalyses taxa-4(20),11-dien-5alpha-yl acetate + reduced [NADPH--hemoprotein reductase] + O2 = 10beta-hydroxytaxa-4(20),11-dien-5alpha-yl acetate + oxidized [NADPH--hemoprotein reductase] + H2O + H(+). It participates in alkaloid biosynthesis; taxol biosynthesis; 10-deacetyl-2-debenzoylbaccatin III from taxa-4(20),11-dien-5alpha-ol: step 2/3. Involved in the transformation of a taxadienyl acetate by hydroxylation at C10 to yield taxadien-5-alpha-acetoxy-10-beta-ol. The polypeptide is Taxane 10-beta-hydroxylase (CYP725A1) (Taxus cuspidata (Japanese yew)).